Consider the following 350-residue polypeptide: Protein RecA (350 aa).

65–72 lines the ATP pocket; sequence GPESSGKT.

This sequence belongs to the RecA family.

It localises to the cytoplasm. Can catalyze the hydrolysis of ATP in the presence of single-stranded DNA, the ATP-dependent uptake of single-stranded DNA by duplex DNA, and the ATP-dependent hybridization of homologous single-stranded DNAs. It interacts with LexA causing its activation and leading to its autocatalytic cleavage. This Clostridium tetani (strain Massachusetts / E88) protein is Protein RecA.